Reading from the N-terminus, the 610-residue chain is Dihydroxy-acid dehydratase (610 aa).

Asp-81 provides a ligand contact to Mg(2+). Cys-122 is a [2Fe-2S] cluster binding site. Asp-123 and Lys-124 together coordinate Mg(2+). The residue at position 124 (Lys-124) is an N6-carboxylysine. Cys-196 provides a ligand contact to [2Fe-2S] cluster. Glu-492 provides a ligand contact to Mg(2+). Ser-518 (proton acceptor) is an active-site residue.

The protein belongs to the IlvD/Edd family. Homodimer. [2Fe-2S] cluster is required as a cofactor. Requires Mg(2+) as cofactor.

The enzyme catalyses (2R)-2,3-dihydroxy-3-methylbutanoate = 3-methyl-2-oxobutanoate + H2O. It catalyses the reaction (2R,3R)-2,3-dihydroxy-3-methylpentanoate = (S)-3-methyl-2-oxopentanoate + H2O. It functions in the pathway amino-acid biosynthesis; L-isoleucine biosynthesis; L-isoleucine from 2-oxobutanoate: step 3/4. Its pathway is amino-acid biosynthesis; L-valine biosynthesis; L-valine from pyruvate: step 3/4. Functionally, functions in the biosynthesis of branched-chain amino acids. Catalyzes the dehydration of (2R,3R)-2,3-dihydroxy-3-methylpentanoate (2,3-dihydroxy-3-methylvalerate) into 2-oxo-3-methylpentanoate (2-oxo-3-methylvalerate) and of (2R)-2,3-dihydroxy-3-methylbutanoate (2,3-dihydroxyisovalerate) into 2-oxo-3-methylbutanoate (2-oxoisovalerate), the penultimate precursor to L-isoleucine and L-valine, respectively. The polypeptide is Dihydroxy-acid dehydratase (Ruegeria pomeroyi (strain ATCC 700808 / DSM 15171 / DSS-3) (Silicibacter pomeroyi)).